The primary structure comprises 575 residues: 2-succinyl-5-enolpyruvyl-6-hydroxy-3-cyclohexene-1-carboxylate synthase (575 aa).

The protein belongs to the TPP enzyme family. MenD subfamily. Homodimer. The cofactor is Mg(2+). Requires Mn(2+) as cofactor. It depends on thiamine diphosphate as a cofactor.

It catalyses the reaction isochorismate + 2-oxoglutarate + H(+) = 5-enolpyruvoyl-6-hydroxy-2-succinyl-cyclohex-3-ene-1-carboxylate + CO2. Its pathway is quinol/quinone metabolism; 1,4-dihydroxy-2-naphthoate biosynthesis; 1,4-dihydroxy-2-naphthoate from chorismate: step 2/7. It functions in the pathway quinol/quinone metabolism; menaquinone biosynthesis. In terms of biological role, catalyzes the thiamine diphosphate-dependent decarboxylation of 2-oxoglutarate and the subsequent addition of the resulting succinic semialdehyde-thiamine pyrophosphate anion to isochorismate to yield 2-succinyl-5-enolpyruvyl-6-hydroxy-3-cyclohexene-1-carboxylate (SEPHCHC). The chain is 2-succinyl-5-enolpyruvyl-6-hydroxy-3-cyclohexene-1-carboxylate synthase from Syntrophus aciditrophicus (strain SB).